A 259-amino-acid polypeptide reads, in one-letter code: uncharacterized protein (259 aa).

This is an uncharacterized protein from Methanocaldococcus jannaschii (strain ATCC 43067 / DSM 2661 / JAL-1 / JCM 10045 / NBRC 100440) (Methanococcus jannaschii).